Here is a 327-residue protein sequence, read N- to C-terminus: MDEDSPAPSLQNIIDQDSLRWIFVGGKGGVGKTTTSCSLAIQLAKNRESVLLISTDPAHNLSDAFGQKFGKDARPVNGIDNLHCMEIDPSGSIQEMIEQAQSAGGAGAGMTNMMQDIAFSIPGVDEAMSFAEVLKQVKSTSYSVIIFDTAPTGHTLRFLTFPTVLEKALGKISELSGRFGPMLGSLMGGQGGPSADDMFAKLNETRATISEVNTQFKNPDLTTFVCVCIPEFLSLYETERMVQDLTSFDIDTHNIVVNQLLYPKKGDDCELCSSRYKMQQKYLEQILDLYEDFHIVRLPQQTQEVRGVQALEKFSNLLVHPYQHIEN.

Residue 27-34 (KGGVGKTT) coordinates ATP. Asp56 is an active-site residue. 2 residues coordinate ATP: Glu231 and Asn258. Zn(2+) contacts are provided by Cys269 and Cys272.

This sequence belongs to the arsA ATPase family. Homodimer. Component of the Golgi to ER traffic (GET) complex, which is composed of GET1, GET2 and GET3. Within the complex, GET1 and GET2 form a heterotetramer which is stabilized by phosphatidylinositol binding and which binds to the GET3 homodimer. Interacts with the chloride channel protein GEF1.

The protein localises to the cytoplasm. The protein resides in the endoplasmic reticulum. It is found in the golgi apparatus. ATPase required for the post-translational delivery of tail-anchored (TA) proteins to the endoplasmic reticulum. Recognizes and selectively binds the transmembrane domain of TA proteins in the cytosol. This complex then targets to the endoplasmic reticulum by membrane-bound receptors GET1 and GET2, where the tail-anchored protein is released for insertion. This process is regulated by ATP binding and hydrolysis. ATP binding drives the homodimer towards the closed dimer state, facilitating recognition of newly synthesized TA membrane proteins. ATP hydrolysis is required for insertion. Subsequently, the homodimer reverts towards the open dimer state, lowering its affinity for the GET1-GET2 receptor, and returning it to the cytosol to initiate a new round of targeting. Cooperates with the HDEL receptor ERD2 to mediate the ATP-dependent retrieval of resident ER proteins that contain a C-terminal H-D-E-L retention signal from the Golgi to the ER. Involved in low-level resistance to the oxyanions arsenite and arsenate, and in heat tolerance. In Yarrowia lipolytica (strain CLIB 122 / E 150) (Yeast), this protein is ATPase GET3.